Consider the following 67-residue polypeptide: Mitotic-spindle organizing protein 1A (67 aa).

The protein belongs to the MOZART1 family. Part of the gamma-tubulin complex. Interacts with GIP1 and GCP3. Mostly expressed in siliques and flowers, and, to a lower extent, in leaves, roots and seedlings, with highest levels in young tissues, meristematic cells, and the vasculature.

Its subcellular location is the cytoplasm. The protein localises to the cytoskeleton. The protein resides in the microtubule organizing center. It is found in the spindle. It localises to the nucleus. Its subcellular location is the phragmoplast. The protein localises to the nucleus envelope. In terms of biological role, required for gamma-tubulin complex recruitment to the microtubule organizing centers (MTOCs). During mitosis, modulates gamma-tubulin complex localization, spindle stability and chromosomal segregation. Necessary for gametophyte development and embryogenesis. The chain is Mitotic-spindle organizing protein 1A (GIP2) from Arabidopsis thaliana (Mouse-ear cress).